The following is a 148-amino-acid chain: Ribonuclease pancreatic (148 aa).

Positions 1-25 (MGLEKSLMLFPLLVLVLGLVQPSLG) are cleaved as a signal peptide. Lys32 and Arg35 together coordinate substrate. The active-site Proton acceptor is His37. Disulfide bonds link Cys50/Cys108, Cys64/Cys119, Cys82/Cys134, and Cys89/Cys96. Residues 65-69 (KPVNT), Lys90, and Arg109 contribute to the substrate site. The active-site Proton donor is the His143.

This sequence belongs to the pancreatic ribonuclease family. As to quaternary structure, monomer. Interacts with and forms tight 1:1 complexes with RNH1. Dimerization of two such complexes may occur. Interaction with RNH1 inhibits this protein. In terms of tissue distribution, pancreas.

It localises to the secreted. It catalyses the reaction an [RNA] containing cytidine + H2O = an [RNA]-3'-cytidine-3'-phosphate + a 5'-hydroxy-ribonucleotide-3'-[RNA].. It carries out the reaction an [RNA] containing uridine + H2O = an [RNA]-3'-uridine-3'-phosphate + a 5'-hydroxy-ribonucleotide-3'-[RNA].. In terms of biological role, endonuclease that catalyzes the cleavage of RNA on the 3' side of pyrimidine nucleotides. Acts on single-stranded and double-stranded RNA. In Gerbilliscus gambianus (Gambian gerbil), this protein is Ribonuclease pancreatic (RNASE1).